The sequence spans 286 residues: MRVLPRLLLLLLLAFPAAVLLRGGPGGSLVAAQDLTEDEETVEDSIIEDEDDEAEVEEDEPTDLAEDKEEEDVSGEPEASPSADTTILFVKGEDFPANNIVKFLVGFTNKGTEDFIVESLDASFRYPQDYQFYIQNFTALPLNTVVPPQRQATFEYSFIPAEPMGGRPFGLVINLNYKDLNGNVFQDAVFNQTVTIIEREDGLDGETIFMYMFLAGLGLLVVVGLHQLLESRKRKRPIQKVEMGTSSQNDVDMSWIPQETLNQINKASPRRLPRKRAQKRSVGSDE.

The N-terminal stretch at 1 to 23 (MRVLPRLLLLLLLAFPAAVLLRG) is a signal peptide. At 24 to 207 (GPGGSLVAAQ…EREDGLDGET (184 aa)) the chain is on the lumenal side. The segment covering 37–75 (EDEETVEDSIIEDEDDEAEVEEDEPTDLAEDKEEEDVSG) has biased composition (acidic residues). The tract at residues 37-83 (EDEETVEDSIIEDEDDEAEVEEDEPTDLAEDKEEEDVSGEPEASPSA) is disordered. N-linked (GlcNAc...) asparagine glycosylation is found at asparagine 136 and asparagine 191. The helical transmembrane segment at 208–228 (IFMYMFLAGLGLLVVVGLHQL) threads the bilayer. Residues 229 to 286 (LESRKRKRPIQKVEMGTSSQNDVDMSWIPQETLNQINKASPRRLPRKRAQKRSVGSDE) lie on the Cytoplasmic side of the membrane. Serine 247 bears the Phosphoserine mark. Phosphothreonine is present on threonine 260. The disordered stretch occupies residues 261 to 286 (LNQINKASPRRLPRKRAQKRSVGSDE). Position 268 is a phosphoserine (serine 268). The span at 268 to 279 (SPRRLPRKRAQK) shows a compositional bias: basic residues.

It belongs to the TRAP-alpha family. Heterotetramer of TRAP-alpha, TRAP-beta, TRAP-delta and TRAP-gamma. Interacts with palmitoylated calnexin (CALX), the interaction is required for efficient folding of glycosylated proteins. In terms of processing, phosphorylated in its cytoplasmic tail.

It localises to the endoplasmic reticulum membrane. Its function is as follows. TRAP proteins are part of a complex whose function is to bind calcium to the ER membrane and thereby regulate the retention of ER resident proteins. May be involved in the recycling of the translocation apparatus after completion of the translocation process or may function as a membrane-bound chaperone facilitating folding of translocated proteins. The protein is Translocon-associated protein subunit alpha (SSR1) of Canis lupus familiaris (Dog).